A 339-amino-acid chain; its full sequence is Dihydroorotase (339 aa).

Zn(2+) is bound by residues histidine 12 and histidine 14. Substrate contacts are provided by residues histidine 14 to arginine 16 and asparagine 40. Residues lysine 94, histidine 133, histidine 167, and aspartate 239 each coordinate Zn(2+). The residue at position 94 (lysine 94) is an N6-carboxylysine. Histidine 133 lines the substrate pocket. Residue aspartate 239 is part of the active site. Substrate is bound by residues histidine 243 and alanine 255.

This sequence belongs to the metallo-dependent hydrolases superfamily. DHOase family. Class II DHOase subfamily. As to quaternary structure, homodimer. Zn(2+) serves as cofactor.

The enzyme catalyses (S)-dihydroorotate + H2O = N-carbamoyl-L-aspartate + H(+). The protein operates within pyrimidine metabolism; UMP biosynthesis via de novo pathway; (S)-dihydroorotate from bicarbonate: step 3/3. Its function is as follows. Catalyzes the reversible cyclization of carbamoyl aspartate to dihydroorotate. The sequence is that of Dihydroorotase from Helicobacter pylori (strain P12).